The following is a 715-amino-acid chain: Gelsolin, cytoplasmic (715 aa).

The interval 1 to 124 (MTTELEIQKA…YLIGGVASGF (124 aa)) is actin-severing. The stretch at 24–75 (FELVPVPKTNHGKFYTGDSYIILKTTALESGRGFEWNLHYWQGKESSQDERG) is one Gelsolin-like 1 repeat. Positions 72 to 75 (DERG) are actin-actin interfilament contact point. Residue 136–145 (KVLTRVKGKR) coordinates a 1,2-diacyl-sn-glycero-3-phospho-(1D-myo-inositol-4,5-bisphosphate). Gelsolin-like repeat units follow at residues 147–187 (VRAT…FEKN), 260–306 (LKIT…TERA), and 405–451 (LRKE…NERT). The tract at residues 384-715 (AAESKMIDDG…FLGWDKTLWD (332 aa)) is actin-binding, Ca-sensitive. The Ca(2+) site is built by glycine 421, aspartate 422, glutamate 449, threonine 499, asparagine 539, aspartate 540, glutamate 562, aspartate 642, and glutamate 665. 2 Gelsolin-like repeats span residues 524-564 (CRAV…SEIQ) and 625-667 (FIAE…EEKM).

The protein belongs to the villin/gelsolin family. In terms of tissue distribution, predominantly in the body wall muscle, but expression is not restricted to muscle cells.

Its subcellular location is the cytoplasm. It localises to the cytoskeleton. In terms of biological role, calcium-regulated, actin-modulating protein that binds to the plus (or barbed) ends of actin monomers or filaments, preventing monomer exchange (end-blocking or capping). It can promote the assembly of monomers into filaments (nucleation) as well as sever filaments already formed. The polypeptide is Gelsolin, cytoplasmic (Halocynthia roretzi (Sea squirt)).